A 238-amino-acid polypeptide reads, in one-letter code: Lactate utilization protein A (238 aa).

This sequence belongs to the LutA/YkgE family.

In terms of biological role, is involved in L-lactate degradation and allows cells to grow with lactate as the sole carbon source. This Bacillus licheniformis (strain ATCC 14580 / DSM 13 / JCM 2505 / CCUG 7422 / NBRC 12200 / NCIMB 9375 / NCTC 10341 / NRRL NRS-1264 / Gibson 46) protein is Lactate utilization protein A.